Reading from the N-terminus, the 1059-residue chain is Cellulose synthase catalytic subunit A [UDP-forming] (1059 aa).

Disordered stretches follow at residues 1 to 159 (MDRN…RFDT) and 174 to 220 (MRQH…KHVA). Low complexity predominate over residues 15 to 36 (NNINSSGGSYNNSMNNSSNNIG). Polar residues-rich tracts occupy residues 40-57 (GNNQ…QSNL) and 142-154 (NSPS…TSGG). The segment covering 181–194 (QEQQQQQQQQQQQQ) has biased composition (low complexity). Positions 204 to 219 (QKKKPSSMQLSKKKHV) are enriched in basic residues. Transmembrane regions (helical) follow at residues 246–266 (FSHA…IFYF), 280–300 (ITFS…LGSA), and 306–323 (FTNP…QILA). The tract at residues 328–628 (KHPTVMMYVC…FLGLLDADQQ (301 aa)) is catalytic subdomain A. D370 is an active-site residue. 2 residues coordinate substrate: D624 and D626. Residues 701 to 761 (QPLYDIGGIM…EQRKRWAQGA (61 aa)) are catalytic subdomain B. D717 is an active-site residue. 2 helical membrane passes run 790-810 (IYPF…IMSI) and 813-833 (VPIV…PVMV). Positions 933–953 (DNAQESSGKHKAEQSFRTSNK) are disordered. A compositionally biased stretch (basic and acidic residues) spans 939-953 (SGKHKAEQSFRTSNK). Transmembrane regions (helical) follow at residues 963 to 983 (LFLP…SAVL), 993 to 1013 (WLLV…WSFI), and 1035 to 1055 (IVLF…KVCI).

The protein belongs to the glycosyltransferase 2 family. The cofactor is Mg(2+).

The protein resides in the membrane. The enzyme catalyses [(1-&gt;4)-beta-D-glucosyl](n) + UDP-alpha-D-glucose = [(1-&gt;4)-beta-D-glucosyl](n+1) + UDP + H(+). Its pathway is glycan metabolism; amoeba cellulose biosynthesis. Catalytic subunit of cellulose synthase. It incorporates glucose from uridine 5'-diphosphate glucose (UDP-alpha-D-glucose) to cellulose (a (1-&gt;4)-beta-D-glucan), which is produced as an extracellular component for mechanical and chemical protection at the onset of the stalk formation, when the cells exhibit multicellular behavior during culmination. The protein is Cellulose synthase catalytic subunit A [UDP-forming] (dcsA) of Dictyostelium discoideum (Social amoeba).